The following is a 184-amino-acid chain: Large ribosomal subunit protein uL6 (184 aa).

It belongs to the universal ribosomal protein uL6 family. In terms of assembly, part of the 50S ribosomal subunit.

In terms of biological role, this protein binds to the 23S rRNA, and is important in its secondary structure. It is located near the subunit interface in the base of the L7/L12 stalk, and near the tRNA binding site of the peptidyltransferase center. The polypeptide is Large ribosomal subunit protein uL6 (Mycoplasma genitalium (strain ATCC 33530 / DSM 19775 / NCTC 10195 / G37) (Mycoplasmoides genitalium)).